The primary structure comprises 390 residues: Queuine tRNA-ribosyltransferase (390 aa).

The active-site Proton acceptor is the Asp90. Substrate-binding positions include 90 to 94 (DSGGF), Asp144, Gln197, and Gly224. Residues 255 to 261 (GVGTPED) are RNA binding. Residue Asp274 is the Nucleophile of the active site. The tract at residues 279 to 283 (TRNAR) is RNA binding; important for wobble base 34 recognition. Residues Cys312, Cys314, Cys317, and His354 each coordinate Zn(2+).

The protein belongs to the queuine tRNA-ribosyltransferase family. Homodimer. Within each dimer, one monomer is responsible for RNA recognition and catalysis, while the other monomer binds to the replacement base PreQ1. Requires Zn(2+) as cofactor.

The catalysed reaction is 7-aminomethyl-7-carbaguanine + guanosine(34) in tRNA = 7-aminomethyl-7-carbaguanosine(34) in tRNA + guanine. The protein operates within tRNA modification; tRNA-queuosine biosynthesis. Catalyzes the base-exchange of a guanine (G) residue with the queuine precursor 7-aminomethyl-7-deazaguanine (PreQ1) at position 34 (anticodon wobble position) in tRNAs with GU(N) anticodons (tRNA-Asp, -Asn, -His and -Tyr). Catalysis occurs through a double-displacement mechanism. The nucleophile active site attacks the C1' of nucleotide 34 to detach the guanine base from the RNA, forming a covalent enzyme-RNA intermediate. The proton acceptor active site deprotonates the incoming PreQ1, allowing a nucleophilic attack on the C1' of the ribose to form the product. After dissociation, two additional enzymatic reactions on the tRNA convert PreQ1 to queuine (Q), resulting in the hypermodified nucleoside queuosine (7-(((4,5-cis-dihydroxy-2-cyclopenten-1-yl)amino)methyl)-7-deazaguanosine). In Leptothrix cholodnii (strain ATCC 51168 / LMG 8142 / SP-6) (Leptothrix discophora (strain SP-6)), this protein is Queuine tRNA-ribosyltransferase.